A 116-amino-acid polypeptide reads, in one-letter code: Large ribosomal subunit protein bL20 (116 aa).

Belongs to the bacterial ribosomal protein bL20 family.

Binds directly to 23S ribosomal RNA and is necessary for the in vitro assembly process of the 50S ribosomal subunit. It is not involved in the protein synthesizing functions of that subunit. This is Large ribosomal subunit protein bL20 from Helicobacter pylori (strain G27).